Consider the following 311-residue polypeptide: Methionyl-tRNA formyltransferase (311 aa).

109–112 serves as a coordination point for (6S)-5,6,7,8-tetrahydrofolate; it reads SLLP.

It belongs to the Fmt family.

It catalyses the reaction L-methionyl-tRNA(fMet) + (6R)-10-formyltetrahydrofolate = N-formyl-L-methionyl-tRNA(fMet) + (6S)-5,6,7,8-tetrahydrofolate + H(+). Functionally, attaches a formyl group to the free amino group of methionyl-tRNA(fMet). The formyl group appears to play a dual role in the initiator identity of N-formylmethionyl-tRNA by promoting its recognition by IF2 and preventing the misappropriation of this tRNA by the elongation apparatus. This is Methionyl-tRNA formyltransferase from Acetivibrio thermocellus (strain ATCC 27405 / DSM 1237 / JCM 9322 / NBRC 103400 / NCIMB 10682 / NRRL B-4536 / VPI 7372) (Clostridium thermocellum).